The sequence spans 257 residues: MCIKRKKTWIAFLAVVCSFCLTGCLKEGGDSNSEKFIVGTNATYPPFEFVDKRGEVVGFDIDLAREISNKLGKTLDVREFSFDALILNLKQHRIDAVITGMSITPSRLKEILMIPYYGEEIKHLVLVFKGENKHPLPLTQYRSVAVQTGTYQEAYLQSLSEVHIRSFDSTLEVLMEVMHGKSPVAVLEPSIAQVVLKDFPALSTATIDLPEDQWVLGYGIGVASDRPALALKIEAAVQEIRKEGVLAELEQKWGLNN.

The first 23 residues, 1 to 23 (MCIKRKKTWIAFLAVVCSFCLTG), serve as a signal peptide directing secretion. L-arginine is bound by residues N41, E48, G100, S102, R107, and Y151.

It belongs to the bacterial solute-binding protein 3 family.

The protein resides in the secreted. Its subcellular location is the cell surface. Functionally, probably part of an ABC transporter complex involved in arginine transport. Binds arginine. Interacts with host epithelial cells, suggesting a role in host-cell adhesion during infection. The polypeptide is Probable ABC transporter arginine-binding protein ArtJ (Chlamydia trachomatis serovar D (strain ATCC VR-885 / DSM 19411 / UW-3/Cx)).